The primary structure comprises 339 residues: Dihydroorotate dehydrogenase (quinone) (339 aa).

Residues 62-66 (AGMDK) and T86 contribute to the FMN site. Residue K66 participates in substrate binding. A substrate-binding site is contributed by 111–115 (NRMGF). FMN is bound by residues N139 and N172. Substrate is bound at residue N172. The Nucleophile role is filled by S175. N177 provides a ligand contact to substrate. Residues K217 and T245 each coordinate FMN. 246 to 247 (NT) provides a ligand contact to substrate. FMN is bound by residues G268, G297, and 318–319 (YS).

This sequence belongs to the dihydroorotate dehydrogenase family. Type 2 subfamily. Monomer. It depends on FMN as a cofactor.

The protein localises to the cell membrane. The enzyme catalyses (S)-dihydroorotate + a quinone = orotate + a quinol. It functions in the pathway pyrimidine metabolism; UMP biosynthesis via de novo pathway; orotate from (S)-dihydroorotate (quinone route): step 1/1. In terms of biological role, catalyzes the conversion of dihydroorotate to orotate with quinone as electron acceptor. The polypeptide is Dihydroorotate dehydrogenase (quinone) (Shewanella baltica (strain OS223)).